The chain runs to 563 residues: uncharacterized protein (563 aa).

Residues 19-45 constitute a DNA-binding region (zn(2)-C6 fungal-type); the sequence is CLICRRRKVKCDRQQPCSRCKERNEVC. The interval 56-78 is disordered; the sequence is NVGPHPSHSENASDSETTLEVSP. Residues 64–75 show a composition bias toward polar residues; the sequence is SENASDSETTLE.

Its subcellular location is the nucleus. This is an uncharacterized protein from Schizosaccharomyces pombe (strain 972 / ATCC 24843) (Fission yeast).